We begin with the raw amino-acid sequence, 170 residues long: MIDFGFDKIALIGAVALIVIGPERLPKVARTVGHLMGKAQRYVADVKAEVNRSIELEELKKMKTDFEDAARNVEQSVSSEVNRTSSEMNQAWESLSSSDGNGGSSGSAAADSYHAGEPLSEPPPAYTHPRKNWRLKRGAMPQWYKQRHGVRAKAQSGAARVARFRPPRPL.

The chain crosses the membrane as a helical span at residues Met-1 to Gly-21. Residues Ala-69 to Leu-170 form a disordered region. Residues Val-73–Glu-93 show a composition bias toward polar residues. Basic residues predominate over residues His-128–Arg-137.

It belongs to the TatB family. In terms of assembly, the Tat system comprises two distinct complexes: a TatABC complex, containing multiple copies of TatA, TatB and TatC subunits, and a separate TatA complex, containing only TatA subunits. Substrates initially bind to the TatABC complex, which probably triggers association of the separate TatA complex to form the active translocon.

It localises to the cell inner membrane. Part of the twin-arginine translocation (Tat) system that transports large folded proteins containing a characteristic twin-arginine motif in their signal peptide across membranes. Together with TatC, TatB is part of a receptor directly interacting with Tat signal peptides. TatB may form an oligomeric binding site that transiently accommodates folded Tat precursor proteins before their translocation. This Methylibium petroleiphilum (strain ATCC BAA-1232 / LMG 22953 / PM1) protein is Sec-independent protein translocase protein TatB.